The following is a 378-amino-acid chain: Putative zinc finger protein 302L (378 aa).

The C2H2-type; degenerate zinc finger occupies 3 to 25 (IVCEFCDKSFDSKSKVNAHQRTK).

The protein belongs to the IIV-6 302L family.

The sequence is that of Putative zinc finger protein 302L from Invertebrate iridescent virus 6 (IIV-6).